The following is a 72-amino-acid chain: MAKDDVIEVDGIVKEALPNAMFRVELENGHVVLCHIAGKMRMHYIKILPGDKVKVELTPYSLDKGRITFRYK.

An S1-like domain is found at 1–72; the sequence is MAKDDVIEVD…DKGRITFRYK (72 aa).

The protein belongs to the IF-1 family. Component of the 30S ribosomal translation pre-initiation complex which assembles on the 30S ribosome in the order IF-2 and IF-3, IF-1 and N-formylmethionyl-tRNA(fMet); mRNA recruitment can occur at any time during PIC assembly.

It localises to the cytoplasm. Functionally, one of the essential components for the initiation of protein synthesis. Stabilizes the binding of IF-2 and IF-3 on the 30S subunit to which N-formylmethionyl-tRNA(fMet) subsequently binds. Helps modulate mRNA selection, yielding the 30S pre-initiation complex (PIC). Upon addition of the 50S ribosomal subunit IF-1, IF-2 and IF-3 are released leaving the mature 70S translation initiation complex. The polypeptide is Translation initiation factor IF-1 (Nitratiruptor sp. (strain SB155-2)).